The chain runs to 514 residues: Calcium-binding mitochondrial carrier protein SCaMC-2 (514 aa).

Over 1-234 (MARPRSLVSP…EKQTGMWWRH (234 aa)) the chain is Mitochondrial intermembrane. 4 EF-hand domains span residues 56-91 (EHER…LGVH), 92-122 (RTEL…HYLR), 123-158 (DHEK…LGVN), and 159-194 (ISEQ…HSAE). Residues D69, N71, D73, D80, D105, D107, D109, Q111, and E116 each coordinate Ca(2+). 3 Solcar repeats span residues 229–315 (GMWW…IKRI), 323–408 (LGIH…LKNA), and 420–508 (PGVF…LKLT). The helical transmembrane segment at 235–252 (LVAGGGAGAVSRTCTAPL) threads the bilayer. Topologically, residues 253 to 289 (DRLKVLMQVHASRSNNMSILGGFTHMIREGGFRSLWR) are mitochondrial matrix. Residues 290 to 309 (GNGINVIKIAPESAIKFMAY) form a helical membrane-spanning segment. At 310-332 (EQIKRIIGSNQETLGIHERFVAG) the chain is on the mitochondrial intermembrane side. The chain crosses the membrane as a helical span at residues 333–346 (SLAGVIAQSSIYPM). Residues 347 to 382 (EVLKTRMALRKTGQYQGVLDCGKKILLQEGLSAFYK) are Mitochondrial matrix-facing. A helical membrane pass occupies residues 383-402 (GYVPNMLGIIPYAGIDLAVY). Over 403 to 425 (ETLKNAWLQRYATSSADPGVFVL) the chain is Mitochondrial intermembrane. Residues 426–443 (LACGTVSSTCGQLASYPL) traverse the membrane as a helical segment. The Mitochondrial matrix portion of the chain corresponds to 444–482 (ALVRTRMQAEASVEGAPQMTMSKLFKHIVKTEGAFGLYR). The helical transmembrane segment at 483-502 (GLAPNFMKVIPAVSISYVVY) threads the bilayer. Topologically, residues 503–514 (ENLKLTLGVQSR) are mitochondrial intermembrane.

It belongs to the mitochondrial carrier (TC 2.A.29) family.

It localises to the mitochondrion inner membrane. In terms of biological role, calcium-dependent mitochondrial solute carrier. The protein is Calcium-binding mitochondrial carrier protein SCaMC-2 (slc25a25) of Xenopus laevis (African clawed frog).